The following is a 129-amino-acid chain: Small ribosomal subunit protein uS12 (129 aa).

Aspartate 89 bears the 3-methylthioaspartic acid mark.

The protein belongs to the universal ribosomal protein uS12 family. As to quaternary structure, part of the 30S ribosomal subunit. Contacts proteins S8 and S17. May interact with IF1 in the 30S initiation complex.

With S4 and S5 plays an important role in translational accuracy. Functionally, interacts with and stabilizes bases of the 16S rRNA that are involved in tRNA selection in the A site and with the mRNA backbone. Located at the interface of the 30S and 50S subunits, it traverses the body of the 30S subunit contacting proteins on the other side and probably holding the rRNA structure together. The combined cluster of proteins S8, S12 and S17 appears to hold together the shoulder and platform of the 30S subunit. The chain is Small ribosomal subunit protein uS12 from Helicobacter hepaticus (strain ATCC 51449 / 3B1).